The chain runs to 194 residues: Small ribosomal subunit protein uS7 (194 aa).

It belongs to the universal ribosomal protein uS7 family. Part of the 30S ribosomal subunit.

In terms of biological role, one of the primary rRNA binding proteins, it binds directly to 16S rRNA where it nucleates assembly of the head domain of the 30S subunit. Is located at the subunit interface close to the decoding center. The sequence is that of Small ribosomal subunit protein uS7 from Sulfurisphaera tokodaii (strain DSM 16993 / JCM 10545 / NBRC 100140 / 7) (Sulfolobus tokodaii).